The primary structure comprises 478 residues: NADH oxidase (478 aa).

FAD contacts are provided by residues 8-12, Asp-33, Cys-43, Val-80, 111-114, Lys-149, and Tyr-177; these read GINHA and ASGA. His-11 acts as the Proton acceptor in catalysis. The active-site Redox-active is Cys-43. Residue Cys-43 is modified to Cysteine sulfinic acid (-SO2H). Residues 170-185, Asp-197, and Gly-264 contribute to the NAD(+) site; that span reads VAIV…LAEA. FAD is bound by residues 295 to 305, Leu-322, Ala-323, and Thr-324; that span reads LNHKDVYVIGG. Residue Ala-353 participates in NAD(+) binding. Residue Phe-450 participates in FAD binding.

Belongs to the class-III pyridine nucleotide-disulfide oxidoreductase family. FAD serves as cofactor.

It carries out the reaction 2 NADH + O2 + 2 H(+) = 2 NAD(+) + 2 H2O. Catalyzes the four-electron reduction of molecular oxygen to water. The protein is NADH oxidase (nox) of Mycoplasma genitalium (strain ATCC 33530 / DSM 19775 / NCTC 10195 / G37) (Mycoplasmoides genitalium).